Reading from the N-terminus, the 360-residue chain is Heat-inducible transcription repressor HrcA (360 aa).

This sequence belongs to the HrcA family.

Functionally, negative regulator of class I heat shock genes (grpE-dnaK-dnaJ and groELS operons). Prevents heat-shock induction of these operons. This Mesorhizobium japonicum (strain LMG 29417 / CECT 9101 / MAFF 303099) (Mesorhizobium loti (strain MAFF 303099)) protein is Heat-inducible transcription repressor HrcA.